The sequence spans 122 residues: Large ribosomal subunit protein uL14 (122 aa).

Belongs to the universal ribosomal protein uL14 family. In terms of assembly, part of the 50S ribosomal subunit. Forms a cluster with proteins L3 and L19. In the 70S ribosome, L14 and L19 interact and together make contacts with the 16S rRNA in bridges B5 and B8.

In terms of biological role, binds to 23S rRNA. Forms part of two intersubunit bridges in the 70S ribosome. The polypeptide is Large ribosomal subunit protein uL14 (Chlorobium phaeovibrioides (strain DSM 265 / 1930) (Prosthecochloris vibrioformis (strain DSM 265))).